The primary structure comprises 115 residues: Virulence-associated protein A' (115 aa).

The HTH cro/C1-type domain maps to 16 to 70 (IKSDLDGLGINITEAAKALDVTRAALSEIINGKRGISAKMAWKLSKAFTNSDPEF). Positions 27–46 (ITEAAKALDVTRAALSEIIN) form a DNA-binding region, H-T-H motif.

It belongs to the VapA/VapI family.

In Dichelobacter nodosus (Bacteroides nodosus), this protein is Virulence-associated protein A' (vapA').